A 276-amino-acid polypeptide reads, in one-letter code: Krueppel homolog 2 (276 aa).

The segment at 1-37 is disordered; that stretch reads MSAPTDQPPRSEGAQTNSSERSSQQQEQPQQSQSQNV. The span at 18-35 shows a compositional bias: low complexity; the sequence is SSERSSQQQEQPQQSQSQ. A Phosphoserine modification is found at Ser22. 3 consecutive transmembrane segments (helical) span residues 53-73, 125-145, and 181-201; these read ALWALRLLVIFFTVSYVLPIF, LIFFNIRPSLLVLIPVLLYSV, and ILKATAFCEIFIMPYAIVLAF.

Belongs to the PER33/POM33 family.

It is found in the membrane. Functionally, member of the dosage-dependent hierarchy effective upon white gene expression. In Drosophila melanogaster (Fruit fly), this protein is Krueppel homolog 2 (Kr-h2).